We begin with the raw amino-acid sequence, 433 residues long: DNA polymerase processivity factor (433 aa).

The tract at residues 274–433 (RGDPFDKNYV…VPNTKKQKCG (160 aa)) is disordered. Gly residues-rich tracts occupy residues 289–298 (SRGGGGGGGS), 325–336 (GLGGLGGGGGGG), and 344–359 (GGGGSGTRKMSSGGGG). Residues 360–376 (GDHDHGLSSKEKYEQHK) show a composition bias toward basic and acidic residues. The span at 385-398 (GGSGGGGGGGGGGL) shows a compositional bias: gly residues. Residue K410 forms a Glycyl lysine isopeptide (Lys-Gly) (interchain with G-Cter in host SUMO1) linkage. Residues S413, S415, and S418 each carry the phosphoserine modification.

Belongs to the herpesviridae polymerase accessory protein family. In terms of assembly, forms homodimers. Interacts with host SMARCB1. Interacts with host NCL/nucleolin; this interaction is important for the organization of proteins within viral replication compartments. Interacts with UL112/UL113; this interaction is necessary for efficient viral DNA replication. Interacts with UL84. Interacts with the uracil DNA glycosylase UL114. Interacts with the DNA polymerase catalytic subunit UL54. Interacts with host IRF3. Interacts with host RELA. Phosphorylated by UL97 on serine residues, phosphorylation seems important for UL44 nuclear entry but does not directly affect its role in replication. Post-translationally, sumoylated. Sumoylation on Lys-410 increases viral DNA replication.

The protein resides in the virion. The protein localises to the host nucleus. In terms of biological role, accessory subunit of the DNA polymerase that plays an essential role in viral DNA replication and acts by increasing the processivity of polymerization. Forms dimers that binds to double-stranded DNA and UL54 specifically to stimulates long chain DNA synthesis efficiently. Plays an important role in maintaining the structure of viral replication compartments by interacting with host nucleolin/NUC. In addition, suppresses innate immune responses through effects on host IRF3 and NF-kappa-B. Mechanistically, interfere with the binding of IRF3 and the p65 NF-kappa-B subunit to the promoters of antiviral genes, thereby inhibiting the expression of these genes. The polypeptide is DNA polymerase processivity factor (UL44) (Homo sapiens (Human)).